Here is a 300-residue protein sequence, read N- to C-terminus: Ribosomal RNA small subunit methyltransferase H (300 aa).

S-adenosyl-L-methionine contacts are provided by residues 33–35 (GGH), Asp52, Phe79, Asp100, and Gln107.

This sequence belongs to the methyltransferase superfamily. RsmH family.

It localises to the cytoplasm. The catalysed reaction is cytidine(1402) in 16S rRNA + S-adenosyl-L-methionine = N(4)-methylcytidine(1402) in 16S rRNA + S-adenosyl-L-homocysteine + H(+). Functionally, specifically methylates the N4 position of cytidine in position 1402 (C1402) of 16S rRNA. The polypeptide is Ribosomal RNA small subunit methyltransferase H (Mycoplasmopsis agalactiae (strain NCTC 10123 / CIP 59.7 / PG2) (Mycoplasma agalactiae)).